A 331-amino-acid chain; its full sequence is Type 2 lactosamine alpha-2,3-sialyltransferase (331 aa).

Residues 1–4 (MRGY) lie on the Cytoplasmic side of the membrane. The helical; Signal-anchor for type II membrane protein transmembrane segment at 5–25 (LVAIFLSAVFLYYVLHCILWG) threads the bilayer. The Lumenal portion of the chain corresponds to 26–331 (TNVYWAAPVE…KNLVINLTQD (306 aa)). 6 N-linked (GlcNAc...) asparagine glycosylation sites follow: N129, N181, N282, N295, N308, and N327.

It belongs to the glycosyltransferase 29 family.

Its subcellular location is the golgi apparatus membrane. The enzyme catalyses a neolactoside nLc4Cer(d18:1(4E)) + CMP-N-acetyl-beta-neuraminate = a neolactoside IV(3)-alpha-NeuAc-nLc4Cer(d18:1(4E)) + CMP + H(+). It catalyses the reaction a beta-D-galactosyl-(1-&gt;4)-N-acetyl-beta-D-glucosaminyl derivative + CMP-N-acetyl-beta-neuraminate = an N-acetyl-alpha-neuraminyl-(2-&gt;3)-beta-D-galactosyl-(1-&gt;4)-N-acetyl-beta-D-glucosaminyl derivative + CMP + H(+). The catalysed reaction is a neolactoside nLc6Cer(d18:1(4E)) + CMP-N-acetyl-beta-neuraminate = a neolactoside VI(3)-alpha-NeuNAc-nLc6Cer(d18:1(4E)) + CMP + H(+). In terms of biological role, transfers the sialyl residue from CMP-N-acetyl-beta-neuraminate to the terminal galactose residue on sugar chains of glycoproteins and glycolipids. It's alpha-2,3-sialyltransferase activity is specific toward type II glycan chains (Galbeta1-4GlcNAc) on glycoproteins and glycolipids such as neolactosides nLc4Cer and nLc6Cer, whose sialyl-products serve as precursors for the Lewis X antigen. Critically involved in the synthesis of functional selectin ligands needed for neutrophil recruitment during inflammation and lymphocyte homing to the lymph nodes. This is Type 2 lactosamine alpha-2,3-sialyltransferase (ST3GAL6) from Pongo abelii (Sumatran orangutan).